Consider the following 567-residue polypeptide: Dihydrolipoyl dehydrogenase 2, chloroplastic (567 aa).

A chloroplast-targeting transit peptide spans 1–67 (MQSVLSLSFS…HIQSRRIEVS (67 aa)). FAD-binding positions include 114-122 (EGDVVGGTC), K131, G197, and 221-223 (TGS). The cysteines at positions 122 and 127 are disulfide-linked. Residues 258–265 (GSGYIGLE), E281, and G354 contribute to the NAD(+) site. FAD-binding positions include D400 and 406–409 (MLAH). H536 acts as the Proton acceptor in catalysis.

Belongs to the class-I pyridine nucleotide-disulfide oxidoreductase family. As to quaternary structure, homodimer. Part of the plastidial pyruvate dehydrogenase complex (PDC) containing multiple copies of three enzymatic components: pyruvate dehydrogenase (E1), dihydrolipoamide acetyltransferase (E2) and lipoamide dehydrogenase (E3). The cofactor is FAD. As to expression, expressed mainly in flower buds and immature siliques, and to a lesser extent in flowers.

The protein localises to the plastid. It is found in the chloroplast stroma. The enzyme catalyses N(6)-[(R)-dihydrolipoyl]-L-lysyl-[protein] + NAD(+) = N(6)-[(R)-lipoyl]-L-lysyl-[protein] + NADH + H(+). Its function is as follows. Lipoamide dehydrogenase is a component of the plastidial pyruvate dehydrogenase complex (PDC). In Arabidopsis thaliana (Mouse-ear cress), this protein is Dihydrolipoyl dehydrogenase 2, chloroplastic (LPD2).